The chain runs to 229 residues: Response regulator SaeR (229 aa).

One can recognise a Response regulatory domain in the interval 3 to 116 (HLLIVDDEKD…ELVLRTNNLL (114 aa)). A 4-aspartylphosphate modification is found at D51. Residues 128–227 (IEQLEFDGLV…VWGLGYKFER (100 aa)) constitute a DNA-binding region (ompR/PhoB-type).

Post-translationally, phosphorylated by SaeS.

The protein resides in the cytoplasm. Its function is as follows. Member of the two-component regulatory system SaeR/SaeS. Probably functions as a transcriptional regulator via a specific DNA-binding domain, recognizing motifs near the promoter sequences of target genes. In Staphylococcus epidermidis (strain ATCC 35984 / DSM 28319 / BCRC 17069 / CCUG 31568 / BM 3577 / RP62A), this protein is Response regulator SaeR (saeR).